Reading from the N-terminus, the 107-residue chain is Circadian clock oscillator protein KaiB (107 aa).

This sequence belongs to the KaiB family. In terms of assembly, may undergo a major conformational rearrangment; in the free state forms homooligomers. When bound to KaiC switches to a monomeric thioredoxin-fold (KaiB(fs)). The active oscillator complex is probably KaiC(6):KaiB(6).

In terms of biological role, component of the KaiBC clock protein complex, which constitutes the main circadian regulator in cyanobacteria; it may modify the ATPase activity of KaiC. Does not stimulate dephosphorylation of endogenous KaiC, although it does stimulate dephosphorylation of KiaC from S.elongatus strain PCC 7942. Reduces the ATPase activity of KaiC by about half in vitro, which may be its function in vivo. Functionally, may be a metamorphic protein which reversibly switches between an inactive tetrameric fold and a rare, thioredoxin-like monomeric fold (KaiB(fs)). KaiB(fs) binds phospho-KaiC, and perhaps clock output effectors. The polypeptide is Circadian clock oscillator protein KaiB (Prochlorococcus marinus subsp. pastoris (strain CCMP1986 / NIES-2087 / MED4)).